The sequence spans 170 residues: Lipoprotein signal peptidase (170 aa).

A run of 3 helical transmembrane segments spans residues 9 to 29 (FNIF…KYLV), 72 to 92 (IFFL…SLKE), and 94 to 114 (NCIA…NVID). Active-site residues include Asp-124 and Asp-146. A helical transmembrane segment spans residues 143–163 (NFADSYVVIGMILFLVYDFFI).

The protein belongs to the peptidase A8 family.

Its subcellular location is the cell inner membrane. The enzyme catalyses Release of signal peptides from bacterial membrane prolipoproteins. Hydrolyzes -Xaa-Yaa-Zaa-|-(S,diacylglyceryl)Cys-, in which Xaa is hydrophobic (preferably Leu), and Yaa (Ala or Ser) and Zaa (Gly or Ala) have small, neutral side chains.. Its pathway is protein modification; lipoprotein biosynthesis (signal peptide cleavage). Functionally, this protein specifically catalyzes the removal of signal peptides from prolipoproteins. This is Lipoprotein signal peptidase from Borreliella burgdorferi (strain ATCC 35210 / DSM 4680 / CIP 102532 / B31) (Borrelia burgdorferi).